The primary structure comprises 322 residues: Putative pyruvyl transferase EpsO (322 aa).

This sequence belongs to the polysaccharide pyruvyl transferase family.

In terms of biological role, may be involved in the production of the exopolysaccharide (EPS) component of the extracellular matrix during biofilm formation. EPS is responsible for the adhesion of chains of cells into bundles. The sequence is that of Putative pyruvyl transferase EpsO (epsO) from Bacillus subtilis (strain 168).